We begin with the raw amino-acid sequence, 633 residues long: Protein CASP (633 aa).

Residues 1-601 lie on the Cytoplasmic side of the membrane; it reads MAVASEALLQ…LLFSRATRGL (601 aa). Positions 39 to 60 are disordered; the sequence is QKTSLDERKELSSKTKEFRKQP. 2 coiled-coil regions span residues 111–339 and 369–433; these read IEAA…LANK and SLES…VDVE. The chain crosses the membrane as a helical; Anchor for type IV membrane protein span at residues 602–622; the sequence is FFMYLILLHLFIMIVLLKLGI. Topologically, residues 623-633 are lumenal; that stretch reads AGNTAYTPMNY.

It belongs to the CASP family.

Its subcellular location is the golgi apparatus membrane. In terms of biological role, may be involved in intra-Golgi transport. This chain is Protein CASP (coy1), found in Schizosaccharomyces pombe (strain 972 / ATCC 24843) (Fission yeast).